Here is a 260-residue protein sequence, read N- to C-terminus: Indole-3-glycerol phosphate synthase (260 aa).

Belongs to the TrpC family.

It catalyses the reaction 1-(2-carboxyphenylamino)-1-deoxy-D-ribulose 5-phosphate + H(+) = (1S,2R)-1-C-(indol-3-yl)glycerol 3-phosphate + CO2 + H2O. It functions in the pathway amino-acid biosynthesis; L-tryptophan biosynthesis; L-tryptophan from chorismate: step 4/5. The polypeptide is Indole-3-glycerol phosphate synthase (Bacteroides thetaiotaomicron (strain ATCC 29148 / DSM 2079 / JCM 5827 / CCUG 10774 / NCTC 10582 / VPI-5482 / E50)).